The chain runs to 281 residues: Transcription factor E2F6 (281 aa).

Lys-9 participates in a covalent cross-link: Glycyl lysine isopeptide (Lys-Gly) (interchain with G-Cter in SUMO2). The DNA-binding element occupies Tyr-50–Ser-129. The DEF box signature appears at Lys-95–Ser-129. Residues Asp-130–Val-222 are dimerization. The interval Leu-143–Cys-164 is leucine-zipper. The segment at Asp-173 to Asn-281 is transcription repression. The segment at Gly-241–Asn-281 is disordered.

It belongs to the E2F/DP family. In terms of assembly, forms heterodimers with DP family members TFDP1 or TFDP2. Component of the DRTF1/E2F transcription factor complex. Part of the E2F6.com-1 complex in G0 phase composed of E2F6, MGA, MAX, TFDP1, CBX3, BAT8, EUHMTASE1, RING1, RNF2, MBLR, L3MBTL2 and YAF2. Component of some MLL1/MLL complex, at least composed of the core components KMT2A/MLL1, ASH2L, HCFC1/HCF1, WDR5 and RBBP5, as well as the facultative components BACC1, CHD8, E2F6, HSP70, INO80C, KANSL1, LAS1L, MAX, MCRS1, MGA, KAT8/MOF, PELP1, PHF20, PRP31, RING2, RUVB1/TIP49A, RUVB2/TIP49B, SENP3, TAF1, TAF4, TAF6, TAF7, TAF9 and TEX10. As to expression, expressed in all tissues examined. Highest levels in placenta, skeletal muscle, heart, ovary, kidney, small intestine and spleen.

The protein resides in the nucleus. Its function is as follows. Inhibitor of E2F-dependent transcription. Binds DNA cooperatively with DP proteins through the E2 recognition site, 5'-TTTC[CG]CGC-3'. Has a preference for the 5'-TTTCCCGC-3' E2F recognition site. E2F6 lacks the transcriptional activation and pocket protein binding domains. Appears to regulate a subset of E2F-dependent genes whose products are required for entry into the cell cycle but not for normal cell cycle progression. Represses expression of some meiosis-specific genes, including SLC25A31/ANT4. May silence expression via the recruitment of a chromatin remodeling complex containing histone H3-K9 methyltransferase activity. Overexpression delays the exit of cells from the S-phase. The chain is Transcription factor E2F6 from Homo sapiens (Human).